Here is a 293-residue protein sequence, read N- to C-terminus: Phosphatidylserine decarboxylase proenzyme (293 aa).

Residues D88, H144, and S247 each act as charge relay system; for autoendoproteolytic cleavage activity in the active site. Residue S247 is the Schiff-base intermediate with substrate; via pyruvic acid; for decarboxylase activity of the active site. S247 is subject to Pyruvic acid (Ser); by autocatalysis.

It belongs to the phosphatidylserine decarboxylase family. PSD-B subfamily. Prokaryotic type I sub-subfamily. Heterodimer of a large membrane-associated beta subunit and a small pyruvoyl-containing alpha subunit. Pyruvate serves as cofactor. In terms of processing, is synthesized initially as an inactive proenzyme. Formation of the active enzyme involves a self-maturation process in which the active site pyruvoyl group is generated from an internal serine residue via an autocatalytic post-translational modification. Two non-identical subunits are generated from the proenzyme in this reaction, and the pyruvate is formed at the N-terminus of the alpha chain, which is derived from the carboxyl end of the proenzyme. The autoendoproteolytic cleavage occurs by a canonical serine protease mechanism, in which the side chain hydroxyl group of the serine supplies its oxygen atom to form the C-terminus of the beta chain, while the remainder of the serine residue undergoes an oxidative deamination to produce ammonia and the pyruvoyl prosthetic group on the alpha chain. During this reaction, the Ser that is part of the protease active site of the proenzyme becomes the pyruvoyl prosthetic group, which constitutes an essential element of the active site of the mature decarboxylase.

It is found in the cell membrane. It carries out the reaction a 1,2-diacyl-sn-glycero-3-phospho-L-serine + H(+) = a 1,2-diacyl-sn-glycero-3-phosphoethanolamine + CO2. It participates in phospholipid metabolism; phosphatidylethanolamine biosynthesis; phosphatidylethanolamine from CDP-diacylglycerol: step 2/2. Functionally, catalyzes the formation of phosphatidylethanolamine (PtdEtn) from phosphatidylserine (PtdSer). The chain is Phosphatidylserine decarboxylase proenzyme from Xylella fastidiosa (strain M23).